The following is a 96-amino-acid chain: Cytochrome c-553 (96 aa).

A signal peptide spans 1-19 (MKKVIVALGVLAFANVLMA). The heme c site is built by C29, C32, H33, and M73.

The protein belongs to the cytochrome c family. Binds 1 heme c group covalently per subunit.

It localises to the periplasm. Natural electron acceptor for a formate dehydrogenase. The protein is Cytochrome c-553 of Helicobacter pylori (strain J99 / ATCC 700824) (Campylobacter pylori J99).